We begin with the raw amino-acid sequence, 341 residues long: tRNA N6-adenosine threonylcarbamoyltransferase (341 aa).

Positions 115 and 119 each coordinate Fe cation. Residues 137–141 (IVSGG), D170, G183, D187, and N276 contribute to the substrate site. D304 provides a ligand contact to Fe cation.

Belongs to the KAE1 / TsaD family. Requires Fe(2+) as cofactor.

It is found in the cytoplasm. The enzyme catalyses L-threonylcarbamoyladenylate + adenosine(37) in tRNA = N(6)-L-threonylcarbamoyladenosine(37) in tRNA + AMP + H(+). Its function is as follows. Required for the formation of a threonylcarbamoyl group on adenosine at position 37 (t(6)A37) in tRNAs that read codons beginning with adenine. Is involved in the transfer of the threonylcarbamoyl moiety of threonylcarbamoyl-AMP (TC-AMP) to the N6 group of A37, together with TsaE and TsaB. TsaD likely plays a direct catalytic role in this reaction. In Staphylococcus aureus (strain JH1), this protein is tRNA N6-adenosine threonylcarbamoyltransferase.